We begin with the raw amino-acid sequence, 345 residues long: CRISPR-associated endonuclease Cas1 1 (345 aa).

Glu-168, His-239, and Glu-254 together coordinate a divalent metal cation.

It belongs to the CRISPR-associated endonuclease Cas1 family. In terms of assembly, forms a heterotetramer with a Cas2 homodimer. Homodimer. The cofactor is a divalent metal cation.

In terms of biological role, CRISPR (clustered regularly interspaced short palindromic repeat), is an adaptive immune system that provides protection against mobile genetic elements (viruses, transposable elements and conjugative plasmids). CRISPR clusters contain sequences complementary to antecedent mobile elements and target invading nucleic acids. CRISPR clusters are transcribed and processed into CRISPR RNA (crRNA). Involved in the integration of spacer DNA into the CRISPR cassette. Acts as a dsDNA and ssRNA nuclease, binds to linear and circular dsDNA and linear ssRNA and ssDNA. The chain is CRISPR-associated endonuclease Cas1 1 from Archaeoglobus fulgidus (strain ATCC 49558 / DSM 4304 / JCM 9628 / NBRC 100126 / VC-16).